The primary structure comprises 393 residues: tRNA(Met) cytidine acetate ligase (393 aa).

ATP-binding residues include Gly81, Asn142, and Arg167.

This sequence belongs to the TmcAL family.

The protein resides in the cytoplasm. The enzyme catalyses cytidine(34) in elongator tRNA(Met) + acetate + ATP = N(4)-acetylcytidine(34) in elongator tRNA(Met) + AMP + diphosphate. Catalyzes the formation of N(4)-acetylcytidine (ac(4)C) at the wobble position of elongator tRNA(Met), using acetate and ATP as substrates. First activates an acetate ion to form acetyladenylate (Ac-AMP) and then transfers the acetyl group to tRNA to form ac(4)C34. The protein is tRNA(Met) cytidine acetate ligase of Bacillus cereus (strain AH187).